A 165-amino-acid chain; its full sequence is MDQAKLARMQASVRIGGKGTPRRKVKKVHKTSGADDKKLQATLKKMNVQPIQAIEEVNMFKEDGNVIHFAAPKEERALTVGCEIKVHASVPSNTFALYGNGEEKELTELVPGILNQLGPDSLASLRKLAESYQNMQKNQAGEKKDDDEDDIPDLVEGENFEKSVD.

Disordered regions lie at residues 1–34 and 133–165; these read MDQAKLARMQASVRIGGKGTPRRKVKKVHKTSGA and QNMQKNQAGEKKDDDEDDIPDLVEGENFEKSVD. The segment covering 20 to 30 has biased composition (basic residues); that stretch reads TPRRKVKKVHK. Residues 33-110 enclose the NAC-A/B domain; it reads GADDKKLQAT…GEEKELTELV (78 aa). Positions 145 to 158 are enriched in acidic residues; the sequence is DDDEDDIPDLVEGE.

It belongs to the NAC-beta family. In terms of assembly, part of the nascent polypeptide-associated complex (NAC), consisting of egd2 and egd1. NAC associates with ribosomes via egd1.

The protein localises to the cytoplasm. Its subcellular location is the nucleus. Functionally, component of the nascent polypeptide-associated complex (NAC), a dynamic component of the ribosomal exit tunnel, protecting the emerging polypeptides from interaction with other cytoplasmic proteins to ensure appropriate nascent protein targeting. The NAC complex also promotes mitochondrial protein import by enhancing productive ribosome interactions with the outer mitochondrial membrane and blocks the inappropriate interaction of ribosomes translating non-secretory nascent polypeptides with translocation sites in the membrane of the endoplasmic reticulum. EGD1 may act as a transcription factor that exert a negative effect on the expression of several genes that are transcribed by RNA polymerase II. The sequence is that of Nascent polypeptide-associated complex subunit beta (egd1) from Emericella nidulans (strain FGSC A4 / ATCC 38163 / CBS 112.46 / NRRL 194 / M139) (Aspergillus nidulans).